A 423-amino-acid chain; its full sequence is ER-bound oxygenase mpaB' (423 aa).

The Lumenal portion of the chain corresponds to 1 to 22 (MSLSLPPALSELARALPYSRTQ). Residues 23–41 (WLPILVGFLIGYPLLIKAL) form a helical membrane-spanning segment. Over 42–423 (RYKRLGEMKK…ISRTGKCPFH (382 aa)) the chain is Cytoplasmic.

Belongs to the mpaB oxygenase family.

Its subcellular location is the endoplasmic reticulum membrane. It carries out the reaction 4-farnesyl-3,5-dihydroxy-6-methylphthalide + AH2 + 2 O2 = (4E,8E)-10-(4,6-dihydroxy-7-methyl-3-oxo-1,3-dihydro-2-benzofuran-5-yl)-4,8-dimethyldeca-4,8-dienoate + acetone + A + H2O + H(+). The protein operates within secondary metabolite biosynthesis; terpenoid biosynthesis. In terms of biological role, ER-bound oxygenase; part of the gene cluster that mediates the biosynthesis of mycophenolic acid (MPA), the first isolated antibiotic natural product in the world obtained from a culture of Penicillium brevicompactum in 1893. MpaB' catalyzes the oxidative cleavage the C19-C20 double bond in farnesyl-DHMP (FDHMP) to yield FDHMP-3C via a mycophenolic aldehyde intermediate. The first step of the pathway is the synthesis of 5-methylorsellinic acid (5MOA) by the cytosolic polyketide synthase mpaC. 5MOA is then converted to the phthalide compound 5,7-dihydroxy-4,6-dimethylphthalide (DHMP) by the endoplasmic reticulum-bound cytochrome P450 monooxygenase mpaDE. MpaDE first catalyzes hydroxylation of 5-MOA to 4,6-dihydroxy-2-(hydroxymethyl)-3-methylbenzoic acid (DHMB). MpaDE then acts as a lactone synthase that catalyzes the ring closure to convert DHMB into DHMP. The next step is the prenylation of DHMP by the Golgi apparatus-associated prenyltransferase mpaA to yield farnesyl-DHMP (FDHMP). The ER-bound oxygenase mpaB then mediates the oxidative cleavage the C19-C20 double bond in FDHMP to yield FDHMP-3C via a mycophenolic aldehyde intermediate. The O-methyltransferase mpaG catalyzes the methylation of FDHMP-3C to yield MFDHMP-3C. After the cytosolic methylation of FDHMP-3C, MFDHMP-3C enters into peroxisomes probably via free diffusion due to its low molecular weight. Upon a peroxisomal CoA ligation reaction, catalyzed by a beta-oxidation component enzyme acyl-CoA ligase ACL891, MFDHMP-3C-CoA would then be restricted to peroxisomes for the following beta-oxidation pathway steps. The peroxisomal beta-oxidation machinery than converts MFDHMP-3C-CoA into MPA_CoA, via a beta-oxidation chain-shortening process. Finally mpaH acts as a peroxisomal acyl-CoA hydrolase with high substrate specificity toward MPA-CoA to release the final product MPA. This chain is ER-bound oxygenase mpaB', found in Penicillium brevicompactum.